The chain runs to 132 residues: Large ribosomal subunit protein bL17 (132 aa).

Belongs to the bacterial ribosomal protein bL17 family. In terms of assembly, part of the 50S ribosomal subunit. Contacts protein L32.

The protein is Large ribosomal subunit protein bL17 of Ehrlichia canis (strain Jake).